We begin with the raw amino-acid sequence, 252 residues long: Glycine-rich cell wall structural protein 1.0 (252 aa).

An N-terminal signal peptide occupies residues M1–L30. Positions G231–P252 are disordered.

In terms of tissue distribution, expressed in young hypocotyls.

It localises to the secreted. The protein localises to the cell wall. In terms of biological role, responsible for plasticity of the cell wall. The protein is Glycine-rich cell wall structural protein 1.0 of Phaseolus vulgaris (Kidney bean).